Consider the following 651-residue polypeptide: Acetyl-coenzyme A synthetase (651 aa).

CoA-binding positions include 193–196 (RRGK) and threonine 312. Residues 388–390 (GEP), 412–417 (DTWWQT), aspartate 501, and arginine 516 contribute to the ATP site. Serine 524 contributes to the CoA binding site. 3 residues coordinate Mg(2+): valine 538, histidine 540, and valine 543. Lysine 610 bears the N6-acetyllysine mark.

The protein belongs to the ATP-dependent AMP-binding enzyme family. The cofactor is Mg(2+). Post-translationally, acetylated. Deacetylation by the SIR2-homolog deacetylase activates the enzyme.

It catalyses the reaction acetate + ATP + CoA = acetyl-CoA + AMP + diphosphate. Its function is as follows. Catalyzes the conversion of acetate into acetyl-CoA (AcCoA), an essential intermediate at the junction of anabolic and catabolic pathways. AcsA undergoes a two-step reaction. In the first half reaction, AcsA combines acetate with ATP to form acetyl-adenylate (AcAMP) intermediate. In the second half reaction, it can then transfer the acetyl group from AcAMP to the sulfhydryl group of CoA, forming the product AcCoA. This chain is Acetyl-coenzyme A synthetase, found in Streptomyces coelicolor (strain ATCC BAA-471 / A3(2) / M145).